A 1580-amino-acid chain; its full sequence is Adhesion G protein-coupled receptor L3 (1580 aa).

The first 19 residues, 1–19, serve as a signal peptide directing secretion; the sequence is MWPSQLLVFMMLLAPIIHG. Topologically, residues 20–949 are extracellular; sequence GKHSERHPAL…VHDLLLDVIT (930 aa). The segment at 23–81 is disordered; the sequence is SERHPALASPLRHAERGPGGALPPRHLLQQPAAERATAHRGPGPRGATRGVRGPGAHGA. Residues 103 to 192 enclose the SUEL-type lectin domain; the sequence is SCESYPIELR…KYLEVQYECV (90 aa). Disulfide bonds link Cys104–Cys134, Cys113–Cys191, Cys146–Cys178, Cys159–Cys165, and Cys203–Cys385. An N-linked (GlcNAc...) asparagine glycan is attached at Asn161. Residues 202 to 461 enclose the Olfactomedin-like domain; sequence LCPGLLKGVY…VVKYSLDFGP (260 aa). An interaction with FLRT3 region spans residues 317 to 347; the sequence is YHDTSPYRWGGKSDIDLAVDENGLWVIYATE. Residues Asp332, Asn380, Ala381, and Val435 each contribute to the Ca(2+) site. Residues 494-540 are disordered; sequence EISTTGPLGTGSTTTSTTLRTTTWSPGRSTTPSVSGRRNRSTSTPSP. Over residues 496–521 the composition is skewed to low complexity; it reads STTGPLGTGSTTTSTTLRTTTWSPGR. Polar residues predominate over residues 522–539; it reads STTPSVSGRRNRSTSTPS. Asn532, Asn617, Asn827, Asn840, Asn885, and Asn911 each carry an N-linked (GlcNAc...) asparagine glycan. Residues 756-935 enclose the GAIN-B domain; the sequence is DIVRENTDNI…AVLMAHVEVK (180 aa). 2 disulfide bridges follow: Cys886–Cys917 and Cys905–Cys919. The GPS stretch occupies residues 886 to 935; it reads CSFWSYSKRTMTGYWSTQGCRLLTTNKTHTTCSCNHLTNFAVLMAHVEVK. Positions 923–939 are stachel; the sequence is TNFAVLMAHVEVKHSDA. A helical transmembrane segment spans residues 950-970; that stretch reads WVGILLSLVCLLICIFTFCFF. Residues 971-978 lie on the Cytoplasmic side of the membrane; the sequence is RGLQSDRN. The helical transmembrane segment at 979 to 999 threads the bilayer; it reads TIHKNLCISLFVAELLFLIGI. The N-linked (GlcNAc...) asparagine glycan is linked to Asn1000. At 1000 to 1007 the chain is on the extracellular side; it reads NRTDQPIA. A helical membrane pass occupies residues 1008–1028; sequence CAVFAALLHFFFLAAFTWMFL. The Cytoplasmic portion of the chain corresponds to 1029 to 1050; that stretch reads EGVQLYIMLVEVFESEHSRRKY. The helical transmembrane segment at 1051 to 1071 threads the bilayer; it reads FYLVGYGMPALIVAVSAAVDY. At 1072–1088 the chain is on the extracellular side; the sequence is RSYGTDKVCWLRLDTYF. The helical transmembrane segment at 1089 to 1109 threads the bilayer; that stretch reads IWSFIGPATLIIMLNVIFLGI. At 1110–1142 the chain is on the cytoplasmic side; sequence ALYKMFHHTAILKPESGCLDNINYEDNRPFIKS. The chain crosses the membrane as a helical span at residues 1143–1163; the sequence is WVIGAIALLCLLGLTWAFGLM. At 1164 to 1169 the chain is on the extracellular side; the sequence is YINEST. Asn1166 carries N-linked (GlcNAc...) asparagine glycosylation. A helical membrane pass occupies residues 1170-1190; the sequence is VIMAYLFTIFNSLQGMFIFIF. The Cytoplasmic segment spans residues 1191 to 1580; that stretch reads HCVLQKKVRK…KGPAHLVTSL (390 aa). The disordered stretch occupies residues 1213-1238; it reads GRSTESSIGSGKTSGSRTPGRYSTGS. At Ser1254 the chain carries Phosphoserine. The disordered stretch occupies residues 1555-1580; that stretch reads FIVPPNKDGTPPEGSSKGPAHLVTSL. The PDZ-binding motif lies at 1575–1580; the sequence is HLVTSL.

This sequence belongs to the G-protein coupled receptor 2 family. LN-TM7 subfamily. Heterodimer of 2 chains generated by proteolytic processing; the large extracellular N-terminal fragment and the membrane-bound C-terminal fragment predominantly remain associated and non-covalently linked. Interacts (via olfactomedin-like domain) with FLRT1 (via extracellular domain). Interacts (via olfactomedin-like domain) with FLRT2 (via extracellular domain). Interacts (via olfactomedin-like domain) with FLRT3 (via extracellular domain); the interaction is direct. Interacts (via extracellular domain) with TENM1. Interacts (via extracellular domain) with TENM2. Interacts (via extracellular domain) with TENM3. Identified in a complex with FLRT3 and UNC5B; does not interact with UNC5B by itself. Identified in a complex with FLRT3 and UNC5D; does not interact with UNC5D by itself. As to quaternary structure, interacts (via PDZ-binding motif) with SHANK3. Interacts (via PDZ-binding motif) with DLG4. In terms of processing, autoproteolytically processed at the GPS region of the GAIN-B domain; this cleavage modulates receptor activity. Brain-specific distribution but low levels are also detected in lung and spleen.

It is found in the cell membrane. The protein localises to the postsynaptic cell membrane. Its subcellular location is the cell projection. It localises to the axon. The protein resides in the cell junction. Forms a heterodimer of 2 chains generated by proteolytic processing that remain associated through non-covalent interactions mediated by the GAIN-B domain. In the inactivated receptor, the Stachel sequence (also named stalk) is embedded in the GAIN-B domain, where it adopts a beta-strand conformation. On activation, the Stachel moves into the 7 transmembrane region and adopts a twisted hook-shaped configuration that forms contacts within the receptor, leading to coupling of a G-alpha protein, which activates signaling. The cleaved GAIN-B and N-terminal domains can then dissociate from the rest of the receptor. Its function is as follows. Orphan adhesion G-protein coupled receptor (aGPCR), which mediates synapse specificity. Ligand binding causes a conformation change that triggers signaling via guanine nucleotide-binding proteins (G proteins) and modulates the activity of downstream effectors. ADGRL3 is coupled with different classes of G alpha proteins, such as G(12)/G(13), G(s), G(i) or G(q), depending on the context. Coupling to G(12)/G(13) G proteins, which mediates the activation Rho small GTPases is the most efficient. Following G-protein coupled receptor activation, associates with cell adhesion molecules that are expressed at the surface of adjacent cells to direct synapse specificity. Specifically mediates the establishment of Schaffer-collateral synapses formed by CA3-region axons on CA1-region pyramidal neurons in the hippocampus. Localizes to postsynaptic spines in excitatory synapses in the S.oriens and S.radiatum and interacts with presynaptic cell adhesion molecules FLRT3 and TENM2, promoting synapse formation. Plays a role in the development of glutamatergic synapses in the cortex. Important in determining the connectivity rates between the principal neurons in the cortex. Functionally, orphan adhesion G-protein coupled receptor (aGPCR), which mediates synapse specificity. Ligand binding causes a conformation change that triggers signaling via guanine nucleotide-binding proteins (G proteins) and modulates the activity of downstream effectors, such as adenylate cyclase. Isoform 1 is specifically coupled to G(s) G proteins and mediates activation of adenylate cyclase activity. Following G-protein coupled receptor activation, undergoes liquid-liquid phase transition, associates with (1) cell adhesion molecules that are expressed at the surface of adjacent cells, as well as (2) PDZ-containing proteins, such as SHANK3 and DLG4, in the cytoplasm to direct synapse formation. The sequence is that of Adhesion G protein-coupled receptor L3 from Bos taurus (Bovine).